The chain runs to 228 residues: 7-cyano-7-deazaguanine synthase (228 aa).

Position 8–18 (8–18 (LSGGLDSTTCL)) interacts with ATP. Zn(2+) is bound by residues cysteine 188, cysteine 198, cysteine 201, and cysteine 204.

The protein belongs to the QueC family. It depends on Zn(2+) as a cofactor.

It carries out the reaction 7-carboxy-7-deazaguanine + NH4(+) + ATP = 7-cyano-7-deazaguanine + ADP + phosphate + H2O + H(+). It participates in purine metabolism; 7-cyano-7-deazaguanine biosynthesis. Catalyzes the ATP-dependent conversion of 7-carboxy-7-deazaguanine (CDG) to 7-cyano-7-deazaguanine (preQ(0)). In Legionella pneumophila (strain Corby), this protein is 7-cyano-7-deazaguanine synthase.